Reading from the N-terminus, the 143-residue chain is DPFSLDVWDPFKDFPFTNSALSASSFPQENSAFVSTRIDWKETPEAHVFKADLPGLKKEEVKVEIEDDRVLQISGERNVEKEDKNDQWHRVERSSGKFMRRFRLPENAKMDQVKAAMENGVLTVTVPKEEIKKPEVKSIEISS.

The 115-residue stretch at 29-143 (ENSAFVSTRI…PEVKSIEISS (115 aa)) folds into the sHSP domain.

It belongs to the small heat shock protein (HSP20) family. As to quaternary structure, forms oligomeric structures.

The protein resides in the cytoplasm. This is 18.1 kDa class I heat shock protein (HSP18.1) from Medicago sativa (Alfalfa).